We begin with the raw amino-acid sequence, 886 residues long: Leucine-rich repeat-containing protein sog2 (886 aa).

6 LRR repeats span residues 28–49 (NALTLDLSHLNLRELPYEQLER), 53–74 (RIARLALGHNFIKSIGPEILKF), 76–97 (RLRYLNIRSNVLREFPESLCRL), 99–120 (SLEILDISRNKIKQLPESFGAL), 122–143 (NLKVLSISKNRLFELPTYIAHM), and 145–166 (NLEILKIENNHIVFPPPHIANN). Disordered stretches follow at residues 236–288 (SPGM…THPP), 301–364 (SPRQ…ASPI), 394–431 (PTQLSASAKTSAISLPEVAKKERNRSNSTNDDYSSTRL), and 455–483 (RIFAQDPHPSPRLKKEETHENGSNLTNDS). The span at 243–277 (VTPSPHSHSPAGHQQSTPKSTLSKTNENSEGTLYD) shows a compositional bias: polar residues. Ser-301 bears the Phosphoserine mark. Polar residues-rich tracts occupy residues 312 to 347 (SLATGLNSPSVSKPPSSATGPLYHSPQSSLTNSSVA), 394 to 406 (PTQLSASAKTSAI), and 419 to 431 (SNSTNDDYSSTRL). At Ser-464 the chain carries Phosphoserine.

The protein resides in the cytoplasm. It localises to the nucleus. This is Leucine-rich repeat-containing protein sog2 from Schizosaccharomyces pombe (strain 972 / ATCC 24843) (Fission yeast).